The following is a 2310-amino-acid chain: MAKDKEKKGNLTGFLFGNVKESGELDVEENDQVFKDLKKDLELFAKSSQHISFKKTIGIDEDDKNAVTDSVIVPDKNALDYEDIDEVAEEIQSTENEINKLNADKLANAAIARLQQQHKEREEQQRLKLLEQQQRQLSKKERRKQRKQVGSKQPLQIKKKPSVDDFDFDEEEEQQQQKSTRSEDEDDDDISSASSLSSSSASSSASSSRSPSMSRSASDIESDSMSDSSRSSGSSISSRSSISSSSSRSDSDSDGGGGGGGGGGGSHRRRHKEKKPKKKVTMKAGSYEVVKSILETPEMFTPEDQEFKVFVSGKSSEGFILKFSQLFAPKFPDKPTRKKSRKTRFSTPQTLNDDSIETDELLLWNQPSKKQPPPSIIKKPITEIDSITKQLLKSNAGITSSTGGGGEEDTLTSSNTTTPTLTSMQLYQAAAEEDEEYVPEPLRETEDEEIMTMFYMVPDSNYHSLQQVNWEDNIIWDEESLIKFKKSDHFNQFYLSSDNQQQNIIIKEAITMPVEINDLTPNLNKNSKQTSSSSTTTSTTTTTSTTTTTTTTTTATTLSSTSTSTTTQRNNKNKNKNNNNNINNSSKLFGLDHISEKEEIMDTDSQNLLQQPLSQEKDKEKEKDKDKAQNEQHIQTIVNNKKNSTTNNNNLTNNNGNNNNTNNNNNNSNNNSNNNNNNNNNNKQNNNKEIDEIMKSNIDKWSLFPISNQELENGDWIDNIIWDESMVPEKIQQVSMLILDLNDREMYFEEHIEKKEHNNGESGSNGDQQAPVKKKSKKKLALEAAQAAQAAALERAQAAARAANGQTMSFEEQLQKDKEEDERKEREEREQSQREIDKFNLSNDKFYRPVRKPPPRPPNGSTKVVIQHSLPGIKLSLVKTHLTKEDLIYAHRPRILFPSNVPFRIIIYNKEGSLSGDLSSSSNNLLLNSSTNSIMGGHNMRGSINGGMMSSSSSSSSSSSKKSLHKSDLSARDGRLVLIEYTEQHPPLVSNVGMGLRIRNYYKKKNTHDTGPKDLNFEDGELVMLDNNEESPFLGDINPGQTIQSVVNNLFKVPIHKHNSANTDFLLVKSRDGKRWYIRDVGPIYAAGQILPEVEVPAPNSRNANMFLKSRLQAYIYRQFLKKSNPQRRLKITDICSAFPSQSETSIRKRLKDCADFQRGGDDSGWWTVKDNFTLPTEEEFQKLVTPEAVVSFESMLIGLQRLQDNGIIHFTAPGTIPTILGNLDDEDPIKKSIKPVEDELSITPWNLTGSFLSAMQGKGRLQIISDDPTGREDEYSYLKMPQKVVNQKQKAIKLALQKNQVTGTDADLRKLSLSASKTVLLELGVDEETINKLARWQRIDLVRKKSSEAALASNSNAAMTKFARGSRYSLDHQNLQYKEQCQLVFDNQIKAIAGKGDDLYDEDLDADLLKDLEDSLFGDSNQSQNQNQNQNQNQNQSNNNNNKSSSKSTGKRSRSLFSRDESDEEEDNEEEEYNKLMGTKNKDEESKAKAKAKAEEEEIKAKAEEAKAKAKAKAEEDDLTQGDRVFVKRTTLFQKPDGSLFKRIEIIRDPKVVQDYQKKKHDQFLQDRKKFGKQNEEDEETKKQRRRIQERLRRLKKNDQREDSFNMNSSNSSIGATIGSSNMINISAGNIPVSNINNNNYNNNNNNNNFSLNTSSSNKPIPPHRSSSSGIGSSGSNNNSNTDRDQTRISIVMPNQQANSDSNSSSSTKIRIGQSSSSSSSSSSSSGHPRSSDREHRSSEHRSGEHRSSEHRSSEHRGSEHRSSEHRSGEHSSHHRSSEHRSGDREHRSSDRGDREHRSSEHRSSEHRSSEHRSSEHRSGDKEHRSDREHRSSEHRSGDREHRSDREHREHRSGDREHRSDREHREHRSERSRNSSSGSSSSSRDHRDSHHRNSTGSSSDSHSSSHHSSSNRDSNHNGGSSSNNNNNNSNNNHNNNNNSNNNNNNNNNNNNNNNINNNNNNNNNINNINNNNNNNINNINNNYNNNNNNNNNNNNNNNNNNNNNNINNNENNNTNNLSNSTNQSPTLSQSGIIIRYNGSNSGNSNNTNGGNNRTEDQSVLNTPLSASSSGSNRKKRTLDQSNSESPSLSSTTLDGSDKSSRRNRVRKDGSGADVELSNIFERILDKLRTNDEFIAFRHKVTPKLAPDYHKVIKNPIDLTTMRDRNRHWEYKSKNQFIDAIKLMVANCFEYNEKRFSHLLPIAEKLLTSTLQLLAPFDSQIGDLEKSIEQTNLKQSSSSLLLSVDHTNGSTPSTPITLNTPITPNLPSNSPFFPPVDPPSKAHHSAEDEEIDIVSLYESGVSPSVKNNFN.

A coiled-coil region spans residues 80-150 (DYEDIDEVAE…ERRKQRKQVG (71 aa)). Disordered regions lie at residues 115 to 284 (QQQH…TMKA), 330 to 352 (KFPD…QTLN), 395 to 421 (NAGI…TPTL), 521 to 587 (PNLN…NSSK), 602 to 686 (DTDS…KQNN), 755 to 778 (KEHN…KSKK), 802 to 862 (AANG…NGST), 937 to 968 (GHNM…HKSD), 1417 to 1494 (LFGD…AKAK), 1558 to 1616 (QKKK…SSIG), and 1648 to 2111 (NNNF…KDGS). The span at 117–129 (QHKEREEQQRLKL) shows a compositional bias: basic and acidic residues. Positions 140–149 (KERRKQRKQV) are enriched in basic residues. Positions 164–174 (DDFDFDEEEEQ) are enriched in acidic residues. Low complexity predominate over residues 191–248 (SSASSLSSSSASSSASSSRSPSMSRSASDIESDSMSDSSRSSGSSISSRSSISSSSSR). Residues 254-265 (DGGGGGGGGGGG) are compositionally biased toward gly residues. Over residues 266 to 281 (SHRRRHKEKKPKKKVT) the composition is skewed to basic residues. 2 stretches are compositionally biased toward low complexity: residues 411–421 (LTSSNTTTPTL) and 524–587 (NKNS…NSSK). The span at 603–614 (TDSQNLLQQPLS) shows a compositional bias: polar residues. Positions 615-630 (QEKDKEKEKDKDKAQN) are enriched in basic and acidic residues. Over residues 639-685 (NNKKNSTTNNNNLTNNNGNNNNTNNNNNNSNNNSNNNNNNNNNNKQN) the composition is skewed to low complexity. Positions 809–846 (SFEEQLQKDKEEDERKEREEREQSQREIDKFNLSNDKF) form a coiled coil. A compositionally biased stretch (basic and acidic residues) spans 813-838 (QLQKDKEEDERKEREEREQSQREIDK). Composition is skewed to low complexity over residues 950–961 (SSSSSSSSSSSK) and 1421–1449 (SNQS…SSKS). Coiled coils occupy residues 1422-1522 (NQSQ…DLTQ) and 1574-1604 (KQNE…QRED). Positions 1462 to 1473 (ESDEEEDNEEEE) are enriched in acidic residues. Composition is skewed to basic and acidic residues over residues 1481–1494 (KNKD…AKAK), 1563–1576 (DQFL…GKQN), and 1588–1605 (RIQE…REDS). Residues 1606–1616 (FNMNSSNSSIG) show a composition bias toward polar residues. Composition is skewed to low complexity over residues 1648–1659 (NNNFSLNTSSSN), 1667–1682 (SSSS…NNSN), and 1700–1730 (NSDS…SGHP). 2 stretches are compositionally biased toward basic and acidic residues: residues 1731-1773 (RSSD…GEHS) and 1780-1874 (EHRS…ERSR). Composition is skewed to low complexity over residues 1895–2023 (STGS…NSTN) and 2038–2053 (NGSN…GGNN). A coiled-coil region spans residues 1946–2004 (NNNNNNNNNNINNNNNNNNNINNINNNNNNNINNINNNYNNNNNNNNNNNNNNNNNNNN). The span at 2058-2072 (QSVLNTPLSASSSGS) shows a compositional bias: polar residues. Residues 2082-2091 (SNSESPSLSS) show a composition bias toward low complexity. The span at 2096-2111 (GSDKSSRRNRVRKDGS) shows a compositional bias: basic and acidic residues. In terms of domain architecture, Bromo spans 2123–2217 (RILDKLRTND…TSTLQLLAPF (95 aa)). The disordered stretch occupies residues 2244 to 2289 (VDHTNGSTPSTPITLNTPITPNLPSNSPFFPPVDPPSKAHHSAEDE). Over residues 2250–2271 (STPSTPITLNTPITPNLPSNSP) the composition is skewed to low complexity.

This sequence belongs to the TAF1 family.

It is found in the nucleus. Its function is as follows. May be a component of the TFIID basal transcription factor complex. The polypeptide is Transcription initiation factor TFIID subunit 1 (taf1) (Dictyostelium discoideum (Social amoeba)).